Here is a 276-residue protein sequence, read N- to C-terminus: Large ribosomal subunit protein uL2 (276 aa).

Residues 212–276 (NRHRGIRPQT…KLIISRKKHK (65 aa)) form a disordered region. The span at 257–276 (YKTRKKKASDKLIISRKKHK) shows a compositional bias: basic residues.

This sequence belongs to the universal ribosomal protein uL2 family. In terms of assembly, part of the 50S ribosomal subunit. Forms a bridge to the 30S subunit in the 70S ribosome.

Its function is as follows. One of the primary rRNA binding proteins. Required for association of the 30S and 50S subunits to form the 70S ribosome, for tRNA binding and peptide bond formation. It has been suggested to have peptidyltransferase activity; this is somewhat controversial. Makes several contacts with the 16S rRNA in the 70S ribosome. This is Large ribosomal subunit protein uL2 from Helicobacter acinonychis (strain Sheeba).